We begin with the raw amino-acid sequence, 218 residues long: Small ribosomal subunit protein uS3c (218 aa).

In terms of domain architecture, KH type-2 spans 47-118 (VQKNMRIFSG…KLNIAITRIG (72 aa)).

Belongs to the universal ribosomal protein uS3 family. Part of the 30S ribosomal subunit.

Its subcellular location is the plastid. The protein resides in the chloroplast. The protein is Small ribosomal subunit protein uS3c (rps3) of Cucumis sativus (Cucumber).